The following is a 172-amino-acid chain: MLVVLFTAVLLTLSYAQEPGDELQILDQTPNQKPPPPGFPPRPPANGSQQGPPPQGGPQQSPLQPGKPQDPPPQGSPQQKPPQPGKPQGPPPPGGPQKKPPQPGKPQGPPPPGGPQKKPPQPGKPQGPTPPGGPQQKPPQAGKPQGPPPPGGPQQKPPQPGNQQGPPPPGGP.

Residues 1–16 (MLVVLFTAVLLTLSYA) form the signal peptide. The disordered stretch occupies residues 22-172 (ELQILDQTPN…QQGPPPPGGP (151 aa)). A compositionally biased stretch (pro residues) spans 32 to 44 (QKPPPPGFPPRPP). A compositionally biased stretch (low complexity) spans 57–67 (GPQQSPLQPGK). Pro residues-rich tracts occupy residues 68–137 (PQDP…PQQK) and 145–172 (QGPPPPGGPQQKPPQPGNQQGPPPPGGP).

The protein resides in the secreted. This chain is Acidic proline-rich protein PRP25, found in Rattus norvegicus (Rat).